The primary structure comprises 396 residues: Transcription factor IIIB 50 kDa subunit (396 aa).

The TFIIB-type zinc-finger motif lies at 3–36 (GAKRCPDCGSSEIVEDAHYSQDQLVCADCGCILS). 4 residues coordinate Zn(2+): C7, C10, C28, and C31. The stretch at 173 to 249 (VKSHCRSFKL…SRRLSCSLSR (77 aa)) is repeat 2. C342 is modified (cysteine sulfenic acid (-SOH)).

This sequence belongs to the TFIIB family. In terms of assembly, component of TFIIIB complexes. Interacts with TBP and forms a ternary complex with TBp and target DNA sequences. In terms of processing, in response to oxidative stress, a Cys-residue is reversibly oxidized to cysteine sulfenic acid. This impairs formation of a ternary complex with TBP and DNA and down-regulates expression of target genes in response to oxidative stress.

It localises to the nucleus. Its function is as follows. General activator of RNA polymerase III transcription. Factor exclusively required for RNA polymerase III transcription of genes with promoter elements upstream of the initiation sites. Contributes to the regulation of gene expression; functions as activator in the absence of oxidative stress. Down-regulates expression of target genes in response to oxidative stress. Overexpression protects cells against apoptosis in response to oxidative stress. The sequence is that of Transcription factor IIIB 50 kDa subunit (brf2) from Xenopus laevis (African clawed frog).